Here is a 298-residue protein sequence, read N- to C-terminus: 33 kDa chaperonin (298 aa).

Intrachain disulfides connect Cys239–Cys241 and Cys272–Cys275.

This sequence belongs to the HSP33 family. In terms of processing, under oxidizing conditions two disulfide bonds are formed involving the reactive cysteines. Under reducing conditions zinc is bound to the reactive cysteines and the protein is inactive.

The protein localises to the cytoplasm. Its function is as follows. Redox regulated molecular chaperone. Protects both thermally unfolding and oxidatively damaged proteins from irreversible aggregation. Plays an important role in the bacterial defense system toward oxidative stress. In Picosynechococcus sp. (strain ATCC 27264 / PCC 7002 / PR-6) (Agmenellum quadruplicatum), this protein is 33 kDa chaperonin.